We begin with the raw amino-acid sequence, 245 residues long: MLIVLPPSETKTHGGSGKPLDFHHLSFPSLTKARQTILADLQALEVDEALKVLGISEKLRPEAESNRALETNPTMPAIFRYSGVLYDALDAATLPEKALERLAIGSALFGVIHATDPIPHYRLSGGTKLPTKSGELPTMKARWGTSISEALIDVNQLVIDLRSGTYQQLGRVKDAVTVRVESVMEDGSRKVVSHFNKHYKGEFARVLALSEKEARTAEDVMSIAQAAGLVVEENPNHKETLTLVV.

The protein belongs to the UPF0246 family.

The sequence is that of UPF0246 protein cgR_1824 from Corynebacterium glutamicum (strain R).